Consider the following 476-residue polypeptide: Siroheme synthase (476 aa).

Positions 1-207 (MTANALFPLF…QRHAEAEAVL (207 aa)) are precorrin-2 dehydrogenase /sirohydrochlorin ferrochelatase. NAD(+) is bound by residues 25–26 (KV) and 46–47 (PS). At Ser132 the chain carries Phosphoserine. The interval 220–476 (GSVTLVGAGA…SAPCPPARIL (257 aa)) is uroporphyrinogen-III C-methyltransferase. The Proton acceptor role is filled by Asp252. Lys274 serves as the catalytic Proton donor. S-adenosyl-L-methionine-binding positions include 305 to 307 (GGD), Val310, 335 to 336 (TA), Met387, and Gly416.

It in the N-terminal section; belongs to the precorrin-2 dehydrogenase / sirohydrochlorin ferrochelatase family. In the C-terminal section; belongs to the precorrin methyltransferase family.

It catalyses the reaction uroporphyrinogen III + 2 S-adenosyl-L-methionine = precorrin-2 + 2 S-adenosyl-L-homocysteine + H(+). The enzyme catalyses precorrin-2 + NAD(+) = sirohydrochlorin + NADH + 2 H(+). It carries out the reaction siroheme + 2 H(+) = sirohydrochlorin + Fe(2+). The protein operates within cofactor biosynthesis; adenosylcobalamin biosynthesis; precorrin-2 from uroporphyrinogen III: step 1/1. It participates in cofactor biosynthesis; adenosylcobalamin biosynthesis; sirohydrochlorin from precorrin-2: step 1/1. It functions in the pathway porphyrin-containing compound metabolism; siroheme biosynthesis; precorrin-2 from uroporphyrinogen III: step 1/1. Its pathway is porphyrin-containing compound metabolism; siroheme biosynthesis; siroheme from sirohydrochlorin: step 1/1. The protein operates within porphyrin-containing compound metabolism; siroheme biosynthesis; sirohydrochlorin from precorrin-2: step 1/1. In terms of biological role, multifunctional enzyme that catalyzes the SAM-dependent methylations of uroporphyrinogen III at position C-2 and C-7 to form precorrin-2 via precorrin-1. Then it catalyzes the NAD-dependent ring dehydrogenation of precorrin-2 to yield sirohydrochlorin. Finally, it catalyzes the ferrochelation of sirohydrochlorin to yield siroheme. This is Siroheme synthase from Xylella fastidiosa (strain M12).